The primary structure comprises 126 residues: Nascent polypeptide-associated complex protein (126 aa).

The region spanning 10-77 is the NAC-A/B domain; that stretch reads PRMMKQMQKM…AKKVAKEEEK (68 aa).

This sequence belongs to the NAC-alpha family. Homodimer. Interacts with the ribosome. Binds ribosomal RNA.

In terms of biological role, contacts the emerging nascent chain on the ribosome. In Methanococcus maripaludis (strain C7 / ATCC BAA-1331), this protein is Nascent polypeptide-associated complex protein.